Here is a 424-residue protein sequence, read N- to C-terminus: Histidine--tRNA ligase (424 aa).

Belongs to the class-II aminoacyl-tRNA synthetase family. As to quaternary structure, homodimer.

It is found in the cytoplasm. It catalyses the reaction tRNA(His) + L-histidine + ATP = L-histidyl-tRNA(His) + AMP + diphosphate + H(+). The polypeptide is Histidine--tRNA ligase (Desulfitobacterium hafniense (strain DSM 10664 / DCB-2)).